Reading from the N-terminus, the 212-residue chain is Thymidylate kinase (212 aa).

An ATP-binding site is contributed by 11–18; the sequence is GIEGSGKT.

It belongs to the thymidylate kinase family.

It carries out the reaction dTMP + ATP = dTDP + ADP. Its function is as follows. Phosphorylation of dTMP to form dTDP in both de novo and salvage pathways of dTTP synthesis. This Buchnera aphidicola subsp. Baizongia pistaciae (strain Bp) protein is Thymidylate kinase.